The primary structure comprises 529 residues: Scarecrow-like protein 13 (529 aa).

A compositionally biased stretch (polar residues) spans 51-81 (ASGSLPSYDSPSVSITSGRSPFSPQGSQSCI). The tract at residues 51-84 (ASGSLPSYDSPSVSITSGRSPFSPQGSQSCISDL) is disordered. A GRAS domain is found at 146-525 (LLALTPQLDL…RPMATCSVWK (380 aa)). The tract at residues 153–213 (LDLKEVLVEA…RARLEGSGSN (61 aa)) is leucine repeat I (LRI). The interval 232–297 (MSVLYEICPY…GGPPLLRVTG (66 aa)) is VHIID. Positions 263-267 (VHIID) match the VHIID motif. Residues 313–345 (LVGERLATLAQSCGVPFEFHDAIMSGCKVQREH) form a leucine repeat II (LRII) region. The segment at 354–448 (VVVNFPYVLH…QHCVARDIVN (95 aa)) is PFYRE. Residues 451 to 525 (ACEESERVER…RPMATCSVWK (75 aa)) are SAW.

Belongs to the GRAS family. Expressed in roots, hypocotyls, cotyledons, shoot apex, leaves, flowers and siliques.

It localises to the cytoplasm. Its subcellular location is the nucleus. In terms of biological role, probable transcription factor that acts as a positive regulator of continuous red light signals downstream of phytochrome B (phyB). Required for the regulation of hypocotyl elongation during de-etiolation. May be required to modulate phytochrome A (phyA) signal transduction in a phyB-independent way. The chain is Scarecrow-like protein 13 (SCL13) from Arabidopsis thaliana (Mouse-ear cress).